The primary structure comprises 479 residues: Probable cytosol aminopeptidase (479 aa).

The Mn(2+) site is built by lysine 251 and aspartate 256. The active site involves lysine 263. Mn(2+) is bound by residues aspartate 274, aspartate 333, and glutamate 335. Arginine 337 is an active-site residue.

This sequence belongs to the peptidase M17 family. The cofactor is Mn(2+).

The protein localises to the cytoplasm. The catalysed reaction is Release of an N-terminal amino acid, Xaa-|-Yaa-, in which Xaa is preferably Leu, but may be other amino acids including Pro although not Arg or Lys, and Yaa may be Pro. Amino acid amides and methyl esters are also readily hydrolyzed, but rates on arylamides are exceedingly low.. It carries out the reaction Release of an N-terminal amino acid, preferentially leucine, but not glutamic or aspartic acids.. In terms of biological role, presumably involved in the processing and regular turnover of intracellular proteins. Catalyzes the removal of unsubstituted N-terminal amino acids from various peptides. This Albidiferax ferrireducens (strain ATCC BAA-621 / DSM 15236 / T118) (Rhodoferax ferrireducens) protein is Probable cytosol aminopeptidase.